Here is a 191-residue protein sequence, read N- to C-terminus: Potassium-transporting ATPase KdpC subunit (191 aa).

A helical membrane pass occupies residues 7 to 27; the sequence is ASLVLFLSLTLLTGVAYPLLV.

This sequence belongs to the KdpC family. As to quaternary structure, the system is composed of three essential subunits: KdpA, KdpB and KdpC.

The protein resides in the cell inner membrane. In terms of biological role, part of the high-affinity ATP-driven potassium transport (or Kdp) system, which catalyzes the hydrolysis of ATP coupled with the electrogenic transport of potassium into the cytoplasm. This subunit acts as a catalytic chaperone that increases the ATP-binding affinity of the ATP-hydrolyzing subunit KdpB by the formation of a transient KdpB/KdpC/ATP ternary complex. The chain is Potassium-transporting ATPase KdpC subunit from Methylibium petroleiphilum (strain ATCC BAA-1232 / LMG 22953 / PM1).